The sequence spans 334 residues: HTH-type transcriptional repressor PurR (334 aa).

Residues 2–56 (ATIKDVARLAGVSTTTVSHVINKTRFVAEATQEKVMKAVDELNYAPSAVARSLKC) form the HTH lacI-type domain. A DNA-binding region (H-T-H motif) is located at residues 4-23 (IKDVARLAGVSTTTVSHVIN). Residues 48-56 (SAVARSLKC) mediate DNA binding. The hypoxanthine site is built by Phe-73, Lys-189, Phe-220, and Asp-274.

Homodimer.

Its pathway is purine metabolism; purine nucleotide biosynthesis [regulation]. Functionally, is the main repressor of the genes involved in the de novo synthesis of purine nucleotides, regulating purB, purC, purEK, purF, purHD, purL, purMN and guaBA expression. PurR is allosterically activated to bind its cognate DNA by binding the purine corepressors, hypoxanthine or guanine, thereby effecting transcription repression. The polypeptide is HTH-type transcriptional repressor PurR (Vibrio vulnificus (strain CMCP6)).